The chain runs to 69 residues: Cytochrome c oxidase subunit 8A, mitochondrial (69 aa).

A mitochondrion-targeting transit peptide spans 1–25 (MSVLTPLLLRGLTGSARRLPMPCAR). The short motif at 2 to 19 (SVLTPLLLRGLTGSARRL) is the SIFI-degron element. Residues 26 to 36 (VHSKPPREQLG) are Mitochondrial matrix-facing. Residues 37-60 (TMDIAIGLTSCFVCFLLPSGWVLS) form a helical membrane-spanning segment. Topologically, residues 61–69 (HLENYKKRE) are mitochondrial intermembrane.

It belongs to the cytochrome c oxidase VIII family. Component of the cytochrome c oxidase (complex IV, CIV), a multisubunit enzyme composed of 14 subunits. The complex is composed of a catalytic core of 3 subunits MT-CO1, MT-CO2 and MT-CO3, encoded in the mitochondrial DNA, and 11 supernumerary subunits COX4I, COX5A, COX5B, COX6A, COX6B, COX6C, COX7A, COX7B, COX7C, COX8 and NDUFA4, which are encoded in the nuclear genome. The complex exists as a monomer or a dimer and forms supercomplexes (SCs) in the inner mitochondrial membrane with NADH-ubiquinone oxidoreductase (complex I, CI) and ubiquinol-cytochrome c oxidoreductase (cytochrome b-c1 complex, complex III, CIII), resulting in different assemblies (supercomplex SCI(1)III(2)IV(1) and megacomplex MCI(2)III(2)IV(2)). In terms of processing, in response to mitochondrial stress, the precursor protein is ubiquitinated by the SIFI complex in the cytoplasm before mitochondrial import, leading to its degradation. Within the SIFI complex, UBR4 initiates ubiquitin chain that are further elongated or branched by KCMF1.

It localises to the mitochondrion inner membrane. It functions in the pathway energy metabolism; oxidative phosphorylation. Its function is as follows. Component of the cytochrome c oxidase, the last enzyme in the mitochondrial electron transport chain which drives oxidative phosphorylation. The respiratory chain contains 3 multisubunit complexes succinate dehydrogenase (complex II, CII), ubiquinol-cytochrome c oxidoreductase (cytochrome b-c1 complex, complex III, CIII) and cytochrome c oxidase (complex IV, CIV), that cooperate to transfer electrons derived from NADH and succinate to molecular oxygen, creating an electrochemical gradient over the inner membrane that drives transmembrane transport and the ATP synthase. Cytochrome c oxidase is the component of the respiratory chain that catalyzes the reduction of oxygen to water. Electrons originating from reduced cytochrome c in the intermembrane space (IMS) are transferred via the dinuclear copper A center (CU(A)) of subunit 2 and heme A of subunit 1 to the active site in subunit 1, a binuclear center (BNC) formed by heme A3 and copper B (CU(B)). The BNC reduces molecular oxygen to 2 water molecules using 4 electrons from cytochrome c in the IMS and 4 protons from the mitochondrial matrix. The protein is Cytochrome c oxidase subunit 8A, mitochondrial (COX8A) of Nycticebus coucang (Slow loris).